The chain runs to 148 residues: 3-dehydroquinate dehydratase (148 aa).

Catalysis depends on Tyr23, which acts as the Proton acceptor. Asn75, His81, and Asp88 together coordinate substrate. The active-site Proton donor is His101. Substrate is bound by residues 102 to 103 (LS) and Arg112.

Belongs to the type-II 3-dehydroquinase family. Homododecamer.

It catalyses the reaction 3-dehydroquinate = 3-dehydroshikimate + H2O. The protein operates within metabolic intermediate biosynthesis; chorismate biosynthesis; chorismate from D-erythrose 4-phosphate and phosphoenolpyruvate: step 3/7. In terms of biological role, catalyzes a trans-dehydration via an enolate intermediate. The polypeptide is 3-dehydroquinate dehydratase (Xanthomonas oryzae pv. oryzae (strain MAFF 311018)).